A 317-amino-acid polypeptide reads, in one-letter code: Melanocyte-stimulating hormone receptor (317 aa).

Topologically, residues 1 to 37 (MPVQGSQRRLLGSLNSTPTATPKLGLAANQTGAQCLE) are extracellular. N-linked (GlcNAc...) asparagine glycosylation occurs at Asn29. The chain crosses the membrane as a helical span at residues 38 to 63 (VSIPDGLFLSLGLVSLVENVLVVAAI). Residues 64–72 (ARNRNLHSP) lie on the Cytoplasmic side of the membrane. Residues 73–93 (MYCFICCLALSDLLVSGSNML) form a helical membrane-spanning segment. Over 94–118 (ETAVILLLEAGALAARAAVVQQLDN) the chain is Extracellular. A helical transmembrane segment spans residues 119-140 (VIDVITCSSMLSSLCFLGAIAM). At 141–163 (DRYISIFYALRYHSIVTLPRARG) the chain is on the cytoplasmic side. Residues 164-183 (VVAAIWVASILFSTLFIAYY) traverse the membrane as a helical segment. Residues 184–191 (DHVAVLLC) are Extracellular-facing. Residues 192–211 (LVVFFLAMLVLMAVLYVHML) form a helical membrane-spanning segment. The Cytoplasmic segment spans residues 212-240 (ARACQHAQGIAQLHKRQRPAHQGVGLKGA). A helical membrane pass occupies residues 241–266 (ATLTILLGIFFLCWGPFFLHLTLIVL). At 267 to 279 (CPQHPTCSCIFKN) the chain is on the extracellular side. A helical transmembrane segment spans residues 280–300 (FNLFLALIICNAIIDPLIYAF). Residues 301–317 (RSQELRRTLKKVLLCSW) are Cytoplasmic-facing. Residue Cys315 is the site of S-palmitoyl cysteine attachment.

It belongs to the G-protein coupled receptor 1 family. In terms of assembly, interacts with MGRN1, but does not undergo MGRN1-mediated ubiquitination; this interaction competes with GNAS-binding and thus inhibits agonist-induced cAMP production. Interacts with OPN3; the interaction results in a decrease in MC1R-mediated cAMP signaling and ultimately a decrease in melanin production in melanocytes.

Its subcellular location is the cell membrane. Its function is as follows. Receptor for MSH (alpha, beta and gamma) and ACTH. The activity of this receptor is mediated by G proteins which activate adenylate cyclase. Mediates melanogenesis, the production of eumelanin (black/brown) and phaeomelanin (red/yellow), via regulation of cAMP signaling in melanocytes. The sequence is that of Melanocyte-stimulating hormone receptor (MC1R) from Presbytis comata (Grizzled leaf monkey).